A 458-amino-acid chain; its full sequence is O-acyltransferase WSD (458 aa).

His-133 (proton acceptor) is an active-site residue.

Belongs to the long-chain O-acyltransferase family.

It carries out the reaction a long chain fatty alcohol + a fatty acyl-CoA = a wax ester + CoA. The catalysed reaction is an acyl-CoA + a 1,2-diacyl-sn-glycerol = a triacyl-sn-glycerol + CoA. It functions in the pathway glycerolipid metabolism; triacylglycerol biosynthesis. Functionally, bifunctional wax ester synthase/diacylglycerol acyltransferase (WS and DGAT). Catalyzes the terminal and only committed step in triacylglycerol synthesis by using diacylglycerol and fatty acyl CoA as substrates. Required for storage lipid synthesis. WS uses C(12)-CoA to C(18)-CoA substrates whereas DGAT prefers C(20)-CoA. Upon expression in E.coli and Pseudomonas citronellolis (DSM 50332) both WS and DGAT activities increase. This Acinetobacter baylyi (strain ATCC 33305 / BD413 / ADP1) protein is O-acyltransferase WSD (wax-dgaT).